Reading from the N-terminus, the 237-residue chain is uncharacterized protein (237 aa).

Residues 1–27 (MKSFLRKPKFWLLLLGGLSTSSIILSA) form the signal peptide. A lipid anchor (N-palmitoyl cysteine) is attached at C28. The S-diacylglycerol cysteine moiety is linked to residue C28.

The protein belongs to the MG307/MG309/MG338 family.

It is found in the membrane. This is an uncharacterized protein from Mycoplasma pneumoniae (strain ATCC 29342 / M129 / Subtype 1) (Mycoplasmoides pneumoniae).